The following is a 922-amino-acid chain: Disintegrin and metalloproteinase domain-containing protein 10 homolog (922 aa).

The first 26 residues, 1-26, serve as a signal peptide directing secretion; the sequence is MSSPIRNRLQLVVTLIFCLFFENVNG. The propeptide occupies 27–228; that stretch reads LNNFIDNFET…YMTMGGRSKR (202 aa). Residues Asn-74, Asn-185, and Asn-346 are each glycosylated (N-linked (GlcNAc...) asparagine). Over 229–745 the chain is Extracellular; sequence ANTLRDHDGL…ETLTQWAQDN (517 aa). The 239-residue stretch at 242 to 480 folds into the Peptidase M12B domain; that stretch reads RTCSLYMQAD…CSVKNISAVL (239 aa). His-426 lines the Zn(2+) pocket. Glu-427 is an active-site residue. Positions 430 and 436 each coordinate Zn(2+). The cysteines at positions 442 and 471 are disulfide-linked. An N-linked (GlcNAc...) asparagine glycan is attached at Asn-475. Residues 511–615 form the Disintegrin domain; sequence SAFCGNQIYE…QCPVSPPKHD (105 aa). 5 disulfide bridges follow: Cys-542-Cys-577, Cys-564-Cys-572, Cys-588-Cys-607, Cys-594-Cys-626, and Cys-619-Cys-631. The N-linked (GlcNAc...) asparagine glycan is linked to Asn-632. 4 disulfides stabilise this stretch: Cys-636–Cys-659, Cys-644–Cys-665, Cys-655–Cys-707, and Cys-700–Cys-713. Asn-677 carries an N-linked (GlcNAc...) asparagine glycan. A helical membrane pass occupies residues 746–766; sequence WWVVGVGGLVFLVIMALFVKC. Residues 767 to 922 are Cytoplasmic-facing; that stretch reads CAVHTPSTNP…SGNGGKKKGK (156 aa). 2 disordered regions span residues 797-837 and 864-922; these read QHRQ…PSAP and PGSS…KKGK. The span at 805-834 shows a compositional bias: low complexity; sequence AAGSVPPGPGAQPRSGAASAPSRTTPSARP.

As to quaternary structure, may interact with tetraspanin tsp-12; the interaction promotes sup-17 cell membrane localization. Zn(2+) serves as cofactor. As to expression, expressed in the germline.

Its subcellular location is the cell membrane. The protein localises to the basolateral cell membrane. The protein resides in the cytoplasmic vesicle membrane. The enzyme catalyses Endopeptidase of broad specificity.. Metalloprotease. Acts together with protease adm-4 and in a cell autonomous manner to facilitate lin-12/Notch signaling during developmental cell fate decision, including anchor cell/ventral uterine precursor cell decision and vulva precursor cell specification. By modulating glp-1/Notch signaling, plays a role in germline development. Probably by modulating BMP-like Sma/Mab signaling via the shedding of unc-40 ectodomain, involved in the regulation of body size and mesoderm development. Probably by shedding ephrin efn-4, regulates axon guidance of SDQL neuron during development. The sequence is that of Disintegrin and metalloproteinase domain-containing protein 10 homolog from Caenorhabditis elegans.